Reading from the N-terminus, the 521-residue chain is uncharacterized protein (521 aa).

A disordered region spans residues 1–25; that stretch reads MLQRSLGVNGRKLAMSARSAKRERK. The next 6 helical transmembrane spans lie at 68-88, 114-134, 160-180, 192-212, 290-310, and 399-419; these read GAVWVLPTFGVAIGLGSGAVL, VLIVVSATMITTIGIVFSLTV, VVLAIFACTFAYSTGGLHTVG, VAVTGSLALAFVSIAALIYFL, ALLVTFVGDYVTAGGLLGWCW, and LLFWLPYPSFATYLHVGCAQI.

It is found in the cell membrane. This is an uncharacterized protein from Mycobacterium bovis (strain ATCC BAA-935 / AF2122/97).